We begin with the raw amino-acid sequence, 214 residues long: Adenylate kinase (214 aa).

10–15 (GAGKGT) provides a ligand contact to ATP. The interval 30 to 59 (STGDMLRAAIKAGSELGQKAKILMDMGQLV) is NMP. AMP-binding positions include Thr31, Arg36, 57–59 (QLV), 85–88 (GFPR), and Gln92. The LID stretch occupies residues 122–159 (GRRVHPASGRTYHIVYNPPKVEDKDDITGEDLILRADD). ATP contacts are provided by residues Arg123 and 132–133 (TY). AMP-binding residues include Arg156 and Arg167. ATP is bound at residue Gln200.

The protein belongs to the adenylate kinase family. In terms of assembly, monomer.

It localises to the cytoplasm. The catalysed reaction is AMP + ATP = 2 ADP. Its pathway is purine metabolism; AMP biosynthesis via salvage pathway; AMP from ADP: step 1/1. In terms of biological role, catalyzes the reversible transfer of the terminal phosphate group between ATP and AMP. Plays an important role in cellular energy homeostasis and in adenine nucleotide metabolism. The protein is Adenylate kinase of Histophilus somni (strain 129Pt) (Haemophilus somnus).